We begin with the raw amino-acid sequence, 91 residues long: MKLVSIFLLVTIGICGYSATALLINRLPVVDKLPVPLDDIIPSFDPLKMLLKTLGISVEHLVTGLKKCVDELGPEASEAVKKLLEALSHLV.

The N-terminal stretch at 1–21 (MKLVSIFLLVTIGICGYSATA) is a signal peptide.

This sequence belongs to the secretoglobin family. UGRP subfamily. As to quaternary structure, homodimer; disulfide-linked. Monomer. Interacts with APOA1. Highly expressed in lung where it localizes to epithelial cells of the trachea, bronchus and bronchioles (at protein level). Expressed in club cells of the bronchioles. Also detected in the anterior and posterior lobes of the pituitary gland where it may localize to gonadotropic cells (at protein level). Not detected in other tissues tested.

It localises to the secreted. In terms of biological role, secreted cytokine-like protein. Binds to the scavenger receptor MARCO. Can also bind to pathogens including the Gram-positive bacterium L.monocytogenes, the Gram-negative bacterium P.aeruginosa, and yeast. Strongly inhibits phospholipase A2 (PLA2G1B) activity. Seems to have anti-inflammatory effects in respiratory epithelium. Also has anti-fibrotic activity in lung. May play a role in fetal lung development and maturation. Promotes branching morphogenesis during early stages of lung development. In the pituitary, may inhibit production of follicle-stimulating hormone (FSH) and luteinizing hormone (LH). In Mus musculus (Mouse), this protein is Secretoglobin family 3A member 2 (Scgb3a2).